The primary structure comprises 423 residues: MFS-type transporter phiL (423 aa).

3 helical membrane-spanning segments follow: residues Ile25–Ile45, Ile82–Val102, and Tyr111–Phe131. N-linked (GlcNAc...) asparagine glycosylation is found at Asn141 and Asn151. The disordered stretch occupies residues Asp166–Asn185. Transmembrane regions (helical) follow at residues Val203–Tyr223, Leu238–Val258, Ile298–Ser318, and Leu321–Tyr341. Asn352 carries N-linked (GlcNAc...) asparagine glycosylation. 2 helical membrane passes run Leu369–Trp389 and Thr390–Phe410.

This sequence belongs to the major facilitator superfamily. CAR1 family.

The protein localises to the membrane. MFS-type transporter; part of the gene cluster that mediates the biosynthesis of the antihypercholesterolemic agents phomoidrides which are dimeric anhydrides. This is MFS-type transporter phiL from Fungal sp. (strain ATCC 74256).